A 339-amino-acid polypeptide reads, in one-letter code: ATPase GET3 (339 aa).

Residue 34 to 41 (KGGVGKTT) coordinates ATP. Asp63 is a catalytic residue. ATP contacts are provided by Glu244 and Asn271. Zn(2+) contacts are provided by Cys282 and Cys285.

This sequence belongs to the arsA ATPase family. In terms of assembly, homodimer.

It localises to the cytoplasm. The protein localises to the endoplasmic reticulum. In terms of biological role, ATPase required for the post-translational delivery of tail-anchored (TA) proteins to the endoplasmic reticulum. Recognizes and selectively binds the transmembrane domain of TA proteins in the cytosol. This complex then targets to the endoplasmic reticulum by membrane-bound receptors, where the tail-anchored protein is released for insertion. This process is regulated by ATP binding and hydrolysis. ATP binding drives the homodimer towards the closed dimer state, facilitating recognition of newly synthesized TA membrane proteins. ATP hydrolysis is required for insertion. Subsequently, the homodimer reverts towards the open dimer state, lowering its affinity for the membrane-bound receptor, and returning it to the cytosol to initiate a new round of targeting. This chain is ATPase GET3, found in Podospora anserina (strain S / ATCC MYA-4624 / DSM 980 / FGSC 10383) (Pleurage anserina).